Here is a 494-residue protein sequence, read N- to C-terminus: 3-octaprenyl-4-hydroxybenzoate carboxy-lyase (494 aa).

Asn172 provides a ligand contact to Mn(2+). Residues 175-177 (IYR), 189-191 (RWL), and 194-195 (RG) contribute to the prenylated FMN site. Glu238 contacts Mn(2+). Residue Asp294 is the Proton donor of the active site.

Belongs to the UbiD family. In terms of assembly, homohexamer. Prenylated FMN is required as a cofactor. Requires Mn(2+) as cofactor.

The protein resides in the cell membrane. The enzyme catalyses a 4-hydroxy-3-(all-trans-polyprenyl)benzoate + H(+) = a 2-(all-trans-polyprenyl)phenol + CO2. It functions in the pathway cofactor biosynthesis; ubiquinone biosynthesis. Catalyzes the decarboxylation of 3-octaprenyl-4-hydroxy benzoate to 2-octaprenylphenol, an intermediate step in ubiquinone biosynthesis. In Janthinobacterium sp. (strain Marseille) (Minibacterium massiliensis), this protein is 3-octaprenyl-4-hydroxybenzoate carboxy-lyase.